The following is a 212-amino-acid chain: Histone H1.2 (212 aa).

A compositionally biased stretch (low complexity) spans 1 to 17 (MSEAAPAAPAAAPPAEK). The segment at 1-41 (MSEAAPAAPAAAPPAEKAPAKKKAAKKPAGVRRKASGPPVS) is disordered. Residue Ser2 is modified to N-acetylserine. At Ser2 the chain carries Phosphoserine. The residue at position 17 (Lys17) is an N6-acetyllysine. Residues 20–35 (AKKKAAKKPAGVRRKA) show a composition bias toward basic residues. N6-(2-hydroxyisobutyryl)lysine is present on residues Lys23, Lys26, and Lys27. Position 34 is an N6-(beta-hydroxybutyryl)lysine; alternate (Lys34). At Lys34 the chain carries N6-crotonyllysine; alternate. Lys34 is modified (N6-methyllysine; alternate). Residues 36–109 (SGPPVSELIT…GASGSFKLNK (74 aa)) form the H15 domain. Residue Lys46 is modified to N6-(2-hydroxyisobutyryl)lysine. The residue at position 52 (Lys52) is an N6-(beta-hydroxybutyryl)lysine; alternate. An N6-(2-hydroxyisobutyryl)lysine; alternate modification is found at Lys52. Arg54 carries the post-translational modification Citrulline. Lys63 is modified (N6-(2-hydroxyisobutyryl)lysine). N6-(beta-hydroxybutyryl)lysine; alternate is present on Lys64. Lys64 carries the post-translational modification N6-crotonyllysine; alternate. Lys64 bears the N6-(2-hydroxyisobutyryl)lysine; alternate mark. N6-(2-hydroxyisobutyryl)lysine is present on residues Lys75 and Lys81. An N6-(beta-hydroxybutyryl)lysine; alternate mark is found at Lys85 and Lys90. Lys85, Lys90, and Lys97 each carry N6-crotonyllysine; alternate. N6-(2-hydroxyisobutyryl)lysine; alternate is present on residues Lys85, Lys90, and Lys97. Lys97 carries the N6-succinyllysine; alternate modification. Residues 98–212 (GTGASGSFKL…KAKKVAAKKK (115 aa)) form a disordered region. Residue Ser104 is modified to Phosphoserine; by PKC. An N6-(beta-hydroxybutyryl)lysine modification is found at Lys106. Lys110, Lys117, Lys121, Lys129, and Lys136 each carry N6-(2-hydroxyisobutyryl)lysine. Residues 121 to 148 (KKAGAAKAKKPAGAAKKPKKATGAATPK) show a composition bias toward low complexity. Thr146 bears the Phosphothreonine mark. Lys148 carries the post-translational modification N6-(2-hydroxyisobutyryl)lysine. The span at 149-160 (KAAKKTPKKAKK) shows a compositional bias: basic residues. Residues Lys159 and Lys168 each carry the N6-crotonyllysine; alternate modification. Residues Lys159 and Lys168 each carry the N6-(2-hydroxyisobutyryl)lysine; alternate modification. A compositionally biased stretch (basic residues) spans 169-212 (KVAKSPKKAKVTKPKKVKSASKAVKPKAAKPKVAKAKKVAAKKK). Lys186 bears the N6-methyllysine; by EHMT1 and EHMT2 mark. Residue Ser187 is modified to ADP-ribosylserine. Lys212 is subject to N6-(2-hydroxyisobutyryl)lysine.

This sequence belongs to the histone H1/H5 family. In terms of assembly, interacts with TSC22D1 isoform 2. Post-translationally, H1 histones are progressively phosphorylated during the cell cycle, becoming maximally phosphorylated during late G2 phase and M phase, and being dephosphorylated sharply thereafter. Crotonylation (Kcr) is specifically present in male germ cells and marks testis-specific genes in post-meiotic cells, including X-linked genes that escape sex chromosome inactivation in haploid cells. Crotonylation marks active promoters and enhancers and confers resistance to transcriptional repressors. It is also associated with post-meiotically activated genes on autosomes. In terms of processing, ADP-ribosylated on Ser-187 in response to DNA damage. Post-translationally, citrullination at Arg-54 (H1R54ci) by PADI4 takes place within the DNA-binding site of H1 and results in its displacement from chromatin and global chromatin decondensation, thereby promoting pluripotency and stem cell maintenance. Hydroxybutyrylation of histones is induced by starvation.

Its subcellular location is the nucleus. It localises to the chromosome. Its function is as follows. Histone H1 protein binds to linker DNA between nucleosomes forming the macromolecular structure known as the chromatin fiber. Histones H1 are necessary for the condensation of nucleosome chains into higher-order structured fibers. Also acts as a regulator of individual gene transcription through chromatin remodeling, nucleosome spacing and DNA methylation. The polypeptide is Histone H1.2 (Mus musculus (Mouse)).